A 260-amino-acid chain; its full sequence is Imidazole glycerol phosphate synthase subunit HisF (260 aa).

Residues aspartate 11 and aspartate 130 contribute to the active site.

This sequence belongs to the HisA/HisF family. As to quaternary structure, heterodimer of HisH and HisF.

The protein localises to the cytoplasm. It carries out the reaction 5-[(5-phospho-1-deoxy-D-ribulos-1-ylimino)methylamino]-1-(5-phospho-beta-D-ribosyl)imidazole-4-carboxamide + L-glutamine = D-erythro-1-(imidazol-4-yl)glycerol 3-phosphate + 5-amino-1-(5-phospho-beta-D-ribosyl)imidazole-4-carboxamide + L-glutamate + H(+). Its pathway is amino-acid biosynthesis; L-histidine biosynthesis; L-histidine from 5-phospho-alpha-D-ribose 1-diphosphate: step 5/9. IGPS catalyzes the conversion of PRFAR and glutamine to IGP, AICAR and glutamate. The HisF subunit catalyzes the cyclization activity that produces IGP and AICAR from PRFAR using the ammonia provided by the HisH subunit. This Psychrobacter cryohalolentis (strain ATCC BAA-1226 / DSM 17306 / VKM B-2378 / K5) protein is Imidazole glycerol phosphate synthase subunit HisF.